The chain runs to 331 residues: Major outer membrane protein P.IB (331 aa).

The signal sequence occupies residues 1 to 19 (MKKSLIALTLAALPVAAMA).

The protein belongs to the Gram-negative porin family. Homotrimer.

The protein localises to the cell outer membrane. Serves as a slightly cation selective porin. The sequence is that of Major outer membrane protein P.IB (porB) from Neisseria meningitidis serogroup B (strain ATCC BAA-335 / MC58).